The sequence spans 428 residues: 3-oxo-tetronate kinase (428 aa).

Residues Ser267, 365 to 368, and Gly409 contribute to the ATP site; that span reads GGET.

The protein belongs to the four-carbon acid sugar kinase family.

The enzyme catalyses 3-dehydro-L-erythronate + ATP = 3-dehydro-4-O-phospho-L-erythronate + ADP + H(+). It carries out the reaction 3-dehydro-D-erythronate + ATP = 3-dehydro-4-O-phospho-D-erythronate + ADP + H(+). Catalyzes the ATP-dependent phosphorylation of 3-oxo-tetronate to 3-oxo-tetronate 4-phosphate. The polypeptide is 3-oxo-tetronate kinase (Burkholderia multivorans (strain ATCC 17616 / 249)).